Reading from the N-terminus, the 576-residue chain is Septation ring formation regulator EzrA (576 aa).

Topologically, residues 1–7 are extracellular; sequence MSSTVII. Residues 8–26 traverse the membrane as a helical segment; sequence LIVVLLVILVAFYAFAILM. At 27-576 the chain is on the cytoplasmic side; that stretch reads RKKTEDRILA…FKNKPTPDYL (550 aa). Coiled-coil stretches lie at residues 105–134 and 277–301; these read RARE…VAQL and EQFE…LYAI.

Belongs to the EzrA family.

Its subcellular location is the cell membrane. In terms of biological role, negative regulator of FtsZ ring formation; modulates the frequency and position of FtsZ ring formation. Inhibits FtsZ ring formation at polar sites. Interacts either with FtsZ or with one of its binding partners to promote depolymerization. This is Septation ring formation regulator EzrA from Lactococcus lactis subsp. lactis (strain IL1403) (Streptococcus lactis).